The primary structure comprises 322 residues: CRISPR-associated endonuclease Cas1 (322 aa).

Mn(2+) is bound by residues Glu-149, His-214, and Glu-229.

This sequence belongs to the CRISPR-associated endonuclease Cas1 family. Homodimer, forms a heterotetramer with a Cas2 homodimer. It depends on Mg(2+) as a cofactor. Mn(2+) is required as a cofactor.

CRISPR (clustered regularly interspaced short palindromic repeat), is an adaptive immune system that provides protection against mobile genetic elements (viruses, transposable elements and conjugative plasmids). CRISPR clusters contain spacers, sequences complementary to antecedent mobile elements, and target invading nucleic acids. CRISPR clusters are transcribed and processed into CRISPR RNA (crRNA). Acts as a dsDNA endonuclease. Involved in the integration of spacer DNA into the CRISPR cassette. The polypeptide is CRISPR-associated endonuclease Cas1 (Methanocaldococcus jannaschii (strain ATCC 43067 / DSM 2661 / JAL-1 / JCM 10045 / NBRC 100440) (Methanococcus jannaschii)).